The primary structure comprises 508 residues: Maturase K (508 aa).

It belongs to the intron maturase 2 family. MatK subfamily.

It localises to the plastid. It is found in the chloroplast. In terms of biological role, usually encoded in the trnK tRNA gene intron. Probably assists in splicing its own and other chloroplast group II introns. The polypeptide is Maturase K (Pelargonium hortorum (Common geranium)).